We begin with the raw amino-acid sequence, 183 residues long: UPF0200 protein MMP1282 (183 aa).

8 to 15 (GMPGSGKS) lines the ATP pocket.

The protein belongs to the UPF0200 family.

In Methanococcus maripaludis (strain DSM 14266 / JCM 13030 / NBRC 101832 / S2 / LL), this protein is UPF0200 protein MMP1282.